The primary structure comprises 679 residues: MAKTTPSSPSAAAAAELVVKSVNTIRFLAIDAVENVKSGHPGMPMGCAPMGHVLFDEFMKFNPKNPYWFNRDRFVLSAGHGAMLLYGLLHLAGYDSVKVEDLKGLRQWGSKTPAHPENFETPGVEVTTGPLGQGVGSAVGLALAEKHLGARYNKPDFEMVDHYTYMILGDGCQMEGISNEASSLAAHWGLGKLIALYDDNHITIDGDTDLAFTEDVGKRFEALGWHVLTVANGNDGYDEIREAIKVAKSVTDKPTLIKVATTIGFGSPNKANTYGVHGNALGPKEAEATRQNLGWPYETFHVPDDVKKHWSRHISEGAELESAWNAKFAEYEKKYPKEAAELKSIITGELPLGWEKALPTYTPESPGNPTRTLSHQNLNAVAAVLPGLIGGSADLTASNMAFLKSSGDFQKETPTGRNLKFGAREHGMGAICNGVALHSPGLVPFSATYFVFTDYMRAAIRIAALSKARVVYIMTHDSIGLGEDGPTHQPVEHLASFRAMPNILVLRPADGNETAGAYKVAVENAGRPSILSLSRQKLPQLPGTSVEGVGRGGYVISDNSKDGEKPEVILMGTGSELEIAARAGEELRKEGKKVRVVSLVSWELFGEQSKEYKEMVLPSEVTARVSVEAGSTFGWERFVGLKGRAVGIDRFGASASAERLYKEFGITVEAVVAAAKELC.

H40 is a substrate binding site. Residues H80 and 129-131 (GPL) contribute to the thiamine diphosphate site. A Mg(2+)-binding site is contributed by D170. G171 and N200 together coordinate thiamine diphosphate. Mg(2+) is bound by residues N200 and I202. Substrate is bound by residues H277, R371, and S398. H277 contacts thiamine diphosphate. Residues E425 and F452 each contribute to the thiamine diphosphate site. E425 acts as the Proton donor in catalysis. H476, D484, and R535 together coordinate substrate.

This sequence belongs to the transketolase family. As to quaternary structure, homodimer. Mg(2+) is required as a cofactor. The cofactor is Ca(2+). Requires Mn(2+) as cofactor. Co(2+) serves as cofactor. It depends on thiamine diphosphate as a cofactor. Leaves.

It catalyses the reaction D-sedoheptulose 7-phosphate + D-glyceraldehyde 3-phosphate = aldehydo-D-ribose 5-phosphate + D-xylulose 5-phosphate. Could be involved in the conversion of sugars, which are a major phenomenon in the rehydration process. Functionally, catalyzes the transfer of a two-carbon ketol group from a ketose donor to an aldose acceptor, via a covalent intermediate with the cofactor thiamine pyrophosphate. The sequence is that of Transketolase 10 (TKT10) from Craterostigma plantagineum (Blue gem).